The primary structure comprises 276 residues: Adenylate kinase (276 aa).

ATP is bound at residue 38–43 (GSGKGT). Positions 58–87 (STGDMLRAAIEQGTETGKQAKTIMDQGGLV) are NMP. Residues T59, R64, 85-87 (GLV), 113-116 (GFPR), and Q120 contribute to the AMP site. Residues 154–191 (GRLVHPSSGRSYHREFFPPKVDMIDDITGEPLIQRSDD) form an LID region. ATP is bound by residues R155 and 164-165 (SY). AMP is bound by residues R188 and R199. K227 is an ATP binding site.

The protein belongs to the adenylate kinase family. AK2 subfamily. In terms of assembly, monomer.

The protein resides in the cytoplasm. Its subcellular location is the cytosol. It is found in the mitochondrion intermembrane space. The enzyme catalyses AMP + ATP = 2 ADP. Its function is as follows. Catalyzes the reversible transfer of the terminal phosphate group between ATP and AMP. Plays an important role in cellular energy homeostasis and in adenine nucleotide metabolism. Adenylate kinase activity is critical for regulation of the phosphate utilization and the AMP de novo biosynthesis pathways. This is Adenylate kinase (adkA) from Dictyostelium discoideum (Social amoeba).